A 708-amino-acid polypeptide reads, in one-letter code: B-cell lymphoma 6 protein homolog (708 aa).

The region spanning 32 to 99 (TDVVIIVNRE…MYTSRLNLRE (68 aa)) is the BTB domain. Basic and acidic residues predominate over residues 303–317 (AKEEERTSSEDEISQ). Disordered stretches follow at residues 303-371 (AKEE…KSPT) and 431-470 (PTKM…QSPL). 2 stretches are compositionally biased toward polar residues: residues 333-370 (SPQS…TKSP) and 431-454 (PTKM…NIVN). C2H2-type zinc fingers lie at residues 520–543 (FFCN…LQVH), 548–570 (YKCD…KTVH), 576–598 (YRCN…TRIH), 604–626 (YKCE…VLIH), 632–654 (YPCE…LRIH), and 660–683 (YHCE…RQKH).

The protein localises to the nucleus. In terms of biological role, transcriptional repressor mainly required for germinal center (GC) formation and antibody affinity maturation which has different mechanisms of action specific to the lineage and biological functions. Forms complexes with different corepressors and histone deacetylases to repress the transcriptional expression of different subsets of target genes. Represses its target genes by binding directly to the DNA sequence 5'-TTCCTAGAA-3' (BCL6-binding site) or indirectly by repressing the transcriptional activity of transcription factors. In GC B-cells, represses genes that function in differentiation, inflammation, apoptosis and cell cycle control, also autoregulates its transcriptional expression and up-regulates, indirectly, the expression of some genes important for GC reactions, such as AICDA, through the repression of microRNAs expression. An important function is to allow GC B-cells to proliferate very rapidly in response to T-cell dependent antigens and tolerate the physiological DNA breaks required for immunglobulin class switch recombination and somatic hypermutation without inducing a p53/TP53-dependent apoptotic response. In follicular helper CD4(+) T-cells (T(FH) cells), promotes the expression of T(FH)-related genes but inhibits the differentiation of T(H)1, T(H)2 and T(H)17 cells. Also required for the establishment and maintenance of immunological memory for both T- and B-cells. Suppresses macrophage proliferation through competition with STAT5 for STAT-binding motifs binding on certain target genes, such as CCL2 and CCND2. In response to genotoxic stress, controls cell cycle arrest in GC B-cells in both p53/TP53-dependedent and -independent manners. Besides, also controls neurogenesis through the alteration of the composition of NOTCH-dependent transcriptional complexes at selective NOTCH targets, such as HES5, including the recruitment of the deacetylase SIRT1 and resulting in an epigenetic silencing leading to neuronal differentiation. The polypeptide is B-cell lymphoma 6 protein homolog (Gallus gallus (Chicken)).